We begin with the raw amino-acid sequence, 2192 residues long: BEACH domain-containing protein lvsE (2192 aa).

Disordered stretches follow at residues 948-969 (STSL…TSTG), 996-1065 (TTTT…DEPE), 1160-1303 (NESQ…NNLS), and 1343-1363 (DENG…SSSN). A compositionally biased stretch (low complexity) spans 996-1049 (TTTTTTTTTTTTTTSTTSNTGNDSPLSIESPISSPVLIENTTNTTNTTTTNTTN). Residues 1171–1187 (NIDNLNPNTGLPYNKST) show a composition bias toward polar residues. Residues 1188-1231 (NNLSNVNNVNNNNNNNSNNINVSGNNTIGPSSSKSPLRNSRSMS) show a composition bias toward low complexity. Positions 1232–1243 (IGSSATKSPSRQ) are enriched in polar residues. Low complexity-rich tracts occupy residues 1253-1303 (NNNS…NNLS) and 1350-1363 (SSPN…SSSN). The region spanning 1366 to 1491 (IEEEKFIGSW…ESIQIFNKIV (126 aa)) is the BEACH-type PH domain. Positions 1504–1795 (DHPSKIIKKS…QLFSKPHPIR (292 aa)) constitute a BEACH domain. The segment covering 1823–1849 (GTINSSFSSTSTSTSTSSPPPSTLNSP) has biased composition (low complexity). The tract at residues 1823–1851 (GTINSSFSSTSTSTSTSSPPPSTLNSPQG) is disordered. WD repeat units lie at residues 1973–2012 (FHHD…IKDS), 2022–2061 (SHDE…YQRS), and 2156–2192 (DSPA…VKDL).

The chain is BEACH domain-containing protein lvsE (lvsE) from Dictyostelium discoideum (Social amoeba).